A 231-amino-acid polypeptide reads, in one-letter code: NADH-ubiquinone oxidoreductase chain 4 (231 aa).

Transmembrane regions (helical) follow at residues 1–21 (PIAGSMVLAAILLKLGGYGII), 34–54 (LFIPFITLALWGATLANLTCL), 61–80 (SLIAYSSISHMGLVVAAITI), 84–106 (WGLSGAMALMIAHGFTSSALFCL), 118–138 (VLILTRGLHNILPMATTWWLL), and 156–178 (LLIMSSLFNWCPTTIILLGLSML).

It belongs to the complex I subunit 4 family.

It is found in the mitochondrion membrane. The catalysed reaction is a ubiquinone + NADH + 5 H(+)(in) = a ubiquinol + NAD(+) + 4 H(+)(out). Functionally, core subunit of the mitochondrial membrane respiratory chain NADH dehydrogenase (Complex I) that is believed to belong to the minimal assembly required for catalysis. Complex I functions in the transfer of electrons from NADH to the respiratory chain. The immediate electron acceptor for the enzyme is believed to be ubiquinone. This is NADH-ubiquinone oxidoreductase chain 4 (MT-ND4) from Azemiops feae (Fea's viper).